The chain runs to 137 residues: Large ribosomal subunit protein uL16 (137 aa).

It belongs to the universal ribosomal protein uL16 family. Part of the 50S ribosomal subunit.

Functionally, binds 23S rRNA and is also seen to make contacts with the A and possibly P site tRNAs. The polypeptide is Large ribosomal subunit protein uL16 (Sorangium cellulosum (strain So ce56) (Polyangium cellulosum (strain So ce56))).